Consider the following 488-residue polypeptide: N-succinylglutamate 5-semialdehyde dehydrogenase (488 aa).

Residue 221 to 226 coordinates NAD(+); it reads GSSRTG. Residues Glu-244 and Cys-278 contribute to the active site.

It belongs to the aldehyde dehydrogenase family. AstD subfamily.

The enzyme catalyses N-succinyl-L-glutamate 5-semialdehyde + NAD(+) + H2O = N-succinyl-L-glutamate + NADH + 2 H(+). Its pathway is amino-acid degradation; L-arginine degradation via AST pathway; L-glutamate and succinate from L-arginine: step 4/5. In terms of biological role, catalyzes the NAD-dependent reduction of succinylglutamate semialdehyde into succinylglutamate. The sequence is that of N-succinylglutamate 5-semialdehyde dehydrogenase from Pseudomonas syringae pv. tomato (strain ATCC BAA-871 / DC3000).